The primary structure comprises 451 residues: Phenylalanine--tRNA ligase, mitochondrial (451 aa).

Residues 157 to 160 (SAHQ), Arg-179, 186 to 188 (QHY), and 193 to 195 (QLE) contribute to the substrate site. Lys-202 carries the N6-acetyllysine modification. Glu-287 and Phe-312 together coordinate substrate. The 93-residue stretch at 358 to 450 (SKYPAVFNDI…AVQLLGVEGR (93 aa)) folds into the FDX-ACB domain.

The protein belongs to the class-II aminoacyl-tRNA synthetase family. Monomer.

It is found in the mitochondrion matrix. Its subcellular location is the mitochondrion. It catalyses the reaction tRNA(Phe) + L-phenylalanine + ATP = L-phenylalanyl-tRNA(Phe) + AMP + diphosphate + H(+). Its function is as follows. Is responsible for the charging of tRNA(Phe) with phenylalanine in mitochondrial translation. To a lesser extent, also catalyzes direct attachment of m-Tyr (an oxidized version of Phe) to tRNA(Phe), thereby opening the way for delivery of the misacylated tRNA to the ribosome and incorporation of ROS-damaged amino acid into proteins. This is Phenylalanine--tRNA ligase, mitochondrial (Fars2) from Mus musculus (Mouse).